The sequence spans 436 residues: 3-ketoacyl-CoA thiolase (436 aa).

The active-site Acyl-thioester intermediate is the cysteine 99. Active-site proton acceptor residues include histidine 392 and cysteine 422.

This sequence belongs to the thiolase-like superfamily. Thiolase family. As to quaternary structure, heterotetramer of two alpha chains (FadJ) and two beta chains (FadI).

Its subcellular location is the cytoplasm. It carries out the reaction an acyl-CoA + acetyl-CoA = a 3-oxoacyl-CoA + CoA. Its pathway is lipid metabolism; fatty acid beta-oxidation. Catalyzes the final step of fatty acid oxidation in which acetyl-CoA is released and the CoA ester of a fatty acid two carbons shorter is formed. This Yersinia pseudotuberculosis serotype O:1b (strain IP 31758) protein is 3-ketoacyl-CoA thiolase.